We begin with the raw amino-acid sequence, 181 residues long: UPF0215 protein AF_1433 (181 aa).

The protein belongs to the UPF0215 family.

This Archaeoglobus fulgidus (strain ATCC 49558 / DSM 4304 / JCM 9628 / NBRC 100126 / VC-16) protein is UPF0215 protein AF_1433.